The primary structure comprises 283 residues: ATP phosphoribosyltransferase (283 aa).

It belongs to the ATP phosphoribosyltransferase family. Long subfamily. Mg(2+) serves as cofactor.

The protein resides in the cytoplasm. The enzyme catalyses 1-(5-phospho-beta-D-ribosyl)-ATP + diphosphate = 5-phospho-alpha-D-ribose 1-diphosphate + ATP. It participates in amino-acid biosynthesis; L-histidine biosynthesis; L-histidine from 5-phospho-alpha-D-ribose 1-diphosphate: step 1/9. Feedback inhibited by histidine. Catalyzes the condensation of ATP and 5-phosphoribose 1-diphosphate to form N'-(5'-phosphoribosyl)-ATP (PR-ATP). Has a crucial role in the pathway because the rate of histidine biosynthesis seems to be controlled primarily by regulation of HisG enzymatic activity. This Bacteroides thetaiotaomicron (strain ATCC 29148 / DSM 2079 / JCM 5827 / CCUG 10774 / NCTC 10582 / VPI-5482 / E50) protein is ATP phosphoribosyltransferase.